The sequence spans 183 residues: Gamma-crystallin N (183 aa).

Beta/gamma crystallin 'Greek key' domains lie at 6–46 (GKIT…RVES), 47–89 (GAWV…RPVG), 95–136 (FRID…KVYG), and 138–180 (GAWV…RRVL).

This sequence belongs to the beta/gamma-crystallin family. In terms of assembly, monomer. In terms of tissue distribution, detected in the auditory hindbrain where it is highly expressed in the medial nucleus of the trapezoid body, but also present in other nuclei of the superior olivary complex.

Crystallins are the dominant structural components of the vertebrate eye lens. Also plays an important role for integrity and function of auditory nuclei. This Rattus norvegicus (Rat) protein is Gamma-crystallin N.